A 913-amino-acid polypeptide reads, in one-letter code: Anoctamin-5 (913 aa).

Residues 1–299 lie on the Cytoplasmic side of the membrane; it reads MGDPDLLEVL…DLIKNYYGEK (299 aa). A helical transmembrane segment spans residues 300–320; that stretch reads IGIYFVFLGFYTEMLFFAAVV. The Extracellular segment spans residues 321 to 380; it reads GLACFIYGLLSMEHNTSSTEICDPEIGGQMIMCPLCDQVCDYWRLNSTCLASKFSHLFDN. N-linked (GlcNAc...) asparagine glycans are attached at residues asparagine 335, asparagine 366, and asparagine 380. Residues 381-401 traverse the membrane as a helical segment; that stretch reads ESTVFFAIFMGIWVTLFLEFW. Topologically, residues 402–462 are cytoplasmic; that stretch reads KQRQARLEYE…YTRIPWYFLS (61 aa). Residues 463–483 form a helical membrane-spanning segment; sequence GATVTLWMSLVVTSMVAVIVY. Topologically, residues 484–511 are extracellular; that stretch reads RLSVFATFASFMESDASLKQVKSFLTPQ. The helical transmembrane segment at 512 to 532 threads the bilayer; that stretch reads ITTSLTGSCLNFIVILILNFF. The Cytoplasmic portion of the chain corresponds to 533–557; the sequence is YEKISAWITKMEIPRTYQEYESSLT. A helical transmembrane segment spans residues 558–578; sequence LKMFLFQFVNFYSSCFYVAFF. The Extracellular portion of the chain corresponds to 579–679; that stretch reads KGKFVGYPGK…FYEYLETVTQ (101 aa). The helical transmembrane segment at 680-700 threads the bilayer; sequence FGFVTLFVASFPLAPLLALIN. The Cytoplasmic portion of the chain corresponds to 701 to 732; that stretch reads NIVEIRVDAWKLTTQYRRTVASKAHSIGVWQD. Residues 733-753 traverse the membrane as a helical segment; sequence ILYGMAVLSVATNAFIVAFTS. The Extracellular segment spans residues 754-834; sequence DIIPRLVYYY…FWHVLAAKMT (81 aa). N-linked (GlcNAc...) asparagine glycans are attached at residues asparagine 768, asparagine 778, and asparagine 791. A helical transmembrane segment spans residues 835-855; the sequence is FIIVMEHVVFLVKFLLAWMIP. The Cytoplasmic portion of the chain corresponds to 856–913; that stretch reads DVPKDVVERIKREKLMTIKILHDFELNKLKENLGINSNEFAKHVMIEENKAQLAKSTL.

Belongs to the anoctamin family. Highly expressed in brain, heart, kidney, lung, and skeletal muscle. Weakly expressed in bone marrow, fetal liver, placenta, spleen, thymus, osteoblasts and periodontal ligament cells.

Its subcellular location is the endoplasmic reticulum membrane. It is found in the cell membrane. Plays a role in plasma membrane repair in a process involving annexins. Does not exhibit calcium-activated chloride channel (CaCC) activity. The polypeptide is Anoctamin-5 (ANO5) (Homo sapiens (Human)).